The primary structure comprises 62 residues: Protein CYSTEINE-RICH TRANSMEMBRANE MODULE 2 (62 aa).

Helical transmembrane passes span Val23–Asp39 and Val33–Ile53.

This sequence belongs to the CYSTM1 family. In terms of assembly, heterodimers. Binds weakly to CYSTM7 and WIH1/CYSTM13. Mostly expressed in stems, siliques, leaves and flowers and, to a lower extent, in roots.

It is found in the cell membrane. It localises to the nucleus. Its subcellular location is the secreted. The protein resides in the cell wall. Functionally, involved in resistance to abiotic stress. Confers resistance to heavy metal ions (e.g. cadmium (CdCl(2)) and copper (CuCl(2))) by chelating them at the plasma membrane of root cells, thus stopping their entry and reducing their accumulation. In Arabidopsis thaliana (Mouse-ear cress), this protein is Protein CYSTEINE-RICH TRANSMEMBRANE MODULE 2.